The sequence spans 255 residues: MGSIVKIRDVKLGEGIPKIAVPLVGSNEEEIMEEIAGVKTTKLDIVEWRIDYYKYVEEVEKVKKLLQKMRKNLNNIPILVTFRTAKEGGKREISLEYYIELNKAIAATGNTDMIDIELFAAEDEAVKKIVEELHEYNIKVIMSNHDFHKTPHKDELISRMCRMQQLGADIAKIAVMPCSTKDVLELLSATCEMKCKHNDTPIITMSMGTLGVITRLAGETFGSALTFGSAKAASAPGQLEVNELYKVLKLISAYR.

Residues 47–49 and R83 each bind 3-dehydroquinate; that span reads EWR. H145 (proton donor/acceptor) is an active-site residue. K172 serves as the catalytic Schiff-base intermediate with substrate. The 3-dehydroquinate site is built by R215, S234, and Q238.

Belongs to the type-I 3-dehydroquinase family. As to quaternary structure, homodimer.

It catalyses the reaction 3-dehydroquinate = 3-dehydroshikimate + H2O. It participates in metabolic intermediate biosynthesis; chorismate biosynthesis; chorismate from D-erythrose 4-phosphate and phosphoenolpyruvate: step 3/7. Functionally, involved in the third step of the chorismate pathway, which leads to the biosynthesis of aromatic amino acids. Catalyzes the cis-dehydration of 3-dehydroquinate (DHQ) and introduces the first double bond of the aromatic ring to yield 3-dehydroshikimate. The polypeptide is 3-dehydroquinate dehydratase (Clostridium kluyveri (strain NBRC 12016)).